A 90-amino-acid chain; its full sequence is MARTVFCEHLKQEAEGLDFQLYPGELGKRIFEHISKQAWGDWLKKQTMLVNEKKLNMMNAEHRKLLEQEMVNFLFEGKDVHIEGYVPPEK.

It belongs to the Fe(2+)-trafficking protein family.

Could be a mediator in iron transactions between iron acquisition and iron-requiring processes, such as synthesis and/or repair of Fe-S clusters in biosynthetic enzymes. This Actinobacillus succinogenes (strain ATCC 55618 / DSM 22257 / CCUG 43843 / 130Z) protein is Probable Fe(2+)-trafficking protein.